Here is a 624-residue protein sequence, read N- to C-terminus: Bifunctional 3'-phosphoadenosine 5'-phosphosulfate synthase 1 (624 aa).

Methionine 1 bears the N-acetylmethionine mark. Residues 1–225 (MELPGSLCKK…VVELLQERDI (225 aa)) form an adenylyl-sulfate kinase region. N6-acetyllysine is present on lysine 12. Residue 62 to 67 (GAGKTT) participates in ATP binding. Adenosine 5'-phosphosulfate is bound by residues 89–92 (DNIR), phenylalanine 101, 106–109 (REEN), 132–133 (IS), lysine 171, and 184–185 (GF). ATP is bound by residues cysteine 207, cysteine 212, 419–422 (QLRN), 521–525 (GRDPA), and alanine 563. The interval 234 to 624 (VKELYVPENK…AEYYKALEKA (391 aa)) is sulfate adenylyltransferase.

The protein in the N-terminal section; belongs to the APS kinase family. In the C-terminal section; belongs to the sulfate adenylyltransferase family. Homodimer.

The enzyme catalyses sulfate + ATP + H(+) = adenosine 5'-phosphosulfate + diphosphate. It catalyses the reaction adenosine 5'-phosphosulfate + ATP = 3'-phosphoadenylyl sulfate + ADP + H(+). Its pathway is sulfur metabolism; sulfate assimilation. Functionally, bifunctional enzyme with both ATP sulfurylase and APS kinase activity, which mediates two steps in the sulfate activation pathway. The first step is the transfer of a sulfate group to ATP to yield adenosine 5'-phosphosulfate (APS), and the second step is the transfer of a phosphate group from ATP to APS yielding 3'-phosphoadenylylsulfate (PAPS: activated sulfate donor used by sulfotransferase). In mammals, PAPS is the sole source of sulfate; APS appears to be only an intermediate in the sulfate-activation pathway. Required for normal biosynthesis of sulfated L-selectin ligands in endothelial cells. This chain is Bifunctional 3'-phosphoadenosine 5'-phosphosulfate synthase 1 (PAPSS1), found in Cavia porcellus (Guinea pig).